The primary structure comprises 298 residues: Mitochondrial intermembrane space import and assembly protein 40 (298 aa).

The transit peptide at 1–33 directs the protein to the mitochondrion; it reads MYRTALRPSQSALRAIRSTTSPSALVSSGARRF. At 34–52 the chain is on the mitochondrial matrix side; sequence ASTTSAPKKKSTWKGAAVR. A helical; Signal-anchor for type II membrane protein transmembrane segment spans residues 53–69; it reads WGLAVAAVYYYNTSPIF. At 70 to 298 the chain is on the mitochondrial intermembrane side; the sequence is SDELPETAGT…TAANNNKKQQ (229 aa). The interval 101–159 is disordered; sequence RQAAEHAAARKAAQAAAKAAATPATPSESVEEQITKAEAEAEAVPEGDSKPRSESTEGV. The segment covering 110 to 121 has biased composition (low complexity); the sequence is RKAAQAAAKAAA. 3 disulfide bridges follow: Cys191–Cys193, Cys202–Cys235, and Cys212–Cys225. A CHCH domain is found at 199-243; the sequence is HGPCGEEFKAAFSCFVYSTEEPKGMDCIEKFSHMQDCFRKYPEVY. Short sequence motifs (cx9C motif) lie at residues 202–212 and 225–235; these read CGEEFKAAFSC and CIEKFSHMQDC. The disordered stretch occupies residues 248 to 298; it reads ADDEEAERASAAAPAAEGTPAKEEPVENKKEEALEPATHDATAANNNKKQQ. A compositionally biased stretch (low complexity) spans 256–266; the sequence is ASAAAPAAEGT. Residues 267-280 show a composition bias toward basic and acidic residues; that stretch reads PAKEEPVENKKEEA.

As to quaternary structure, monomer. Cu(2+) serves as cofactor. The cofactor is Zn(2+).

Its subcellular location is the mitochondrion inner membrane. Required for the import and folding of small cysteine-containing proteins (small Tim) in the mitochondrial intermembrane space (IMS). Forms a redox cycle with ERV1 that involves a disulfide relay system. Precursor proteins to be imported into the IMS are translocated in their reduced form into the mitochondria. The oxidized form of MIA40 forms a transient intermolecular disulfide bridge with the reduced precursor protein, resulting in oxidation of the precursor protein that now contains an intramolecular disulfide bond and is able to undergo folding in the IMS. The polypeptide is Mitochondrial intermembrane space import and assembly protein 40 (mia-40) (Neurospora crassa (strain ATCC 24698 / 74-OR23-1A / CBS 708.71 / DSM 1257 / FGSC 987)).